The primary structure comprises 423 residues: Anthranilate 1,2-dioxygenase large subunit (423 aa).

The Rieske domain occupies 53–168 (WNFVALEAEI…VDSYRGLVFA (116 aa)). 4 residues coordinate [2Fe-2S] cluster: Cys-95, His-97, Cys-115, and His-118. Fe cation contacts are provided by His-223, His-228, and Asp-370.

The protein belongs to the bacterial ring-hydroxylating dioxygenase alpha subunit family. Part of a multicomponent enzyme system composed of a reductase (AndAa), a ferredoxin (AndAb) and a two-subunit oxygenase component (AndAc and AndAd). The cofactor is Fe cation. [2Fe-2S] cluster is required as a cofactor.

The catalysed reaction is anthranilate + NADH + O2 + 3 H(+) = catechol + NH4(+) + CO2 + NAD(+). It catalyses the reaction anthranilate + NADPH + O2 + 3 H(+) = catechol + NH4(+) + CO2 + NADP(+). The protein operates within aromatic compound metabolism; anthranilate degradation via hydroxylation; catechol from anthranilate: step 1/1. Its function is as follows. Oxygenase component of anthranilate dioxygenase multicomponent enzyme system which catalyzes the incorporation of both atoms of molecular oxygen into anthranilate to form catechol. Can also act on benzoate and salicylate but not on 2-chlorobenzoate or o-toluate. The protein is Anthranilate 1,2-dioxygenase large subunit of Burkholderia cepacia (Pseudomonas cepacia).